The primary structure comprises 510 residues: 2,3-bisphosphoglycerate-independent phosphoglycerate mutase (510 aa).

Residues Asp-12 and Ser-62 each coordinate Mn(2+). Catalysis depends on Ser-62, which acts as the Phosphoserine intermediate. Residues His-123, 153–154, Arg-185, Arg-191, 260–263, and Lys-333 contribute to the substrate site; these read RD and RPDR. Mn(2+)-binding residues include Asp-400, His-404, Asp-441, His-442, and His-460.

This sequence belongs to the BPG-independent phosphoglycerate mutase family. As to quaternary structure, monomer. Mn(2+) is required as a cofactor.

The enzyme catalyses (2R)-2-phosphoglycerate = (2R)-3-phosphoglycerate. It participates in carbohydrate degradation; glycolysis; pyruvate from D-glyceraldehyde 3-phosphate: step 3/5. In terms of biological role, catalyzes the interconversion of 2-phosphoglycerate and 3-phosphoglycerate. This is 2,3-bisphosphoglycerate-independent phosphoglycerate mutase from Clostridium acetobutylicum (strain ATCC 824 / DSM 792 / JCM 1419 / IAM 19013 / LMG 5710 / NBRC 13948 / NRRL B-527 / VKM B-1787 / 2291 / W).